Consider the following 529-residue polypeptide: MGTQRNGYSKRETFILSVDVGTTSIRCHVYDKSASIRGSCSAKVSLLYPQPGWVEIDPDELWDGFVTVVKGAVQDSGLQMCQMESLGISTQRATFMTWDRNTGKPFHKFITWQDMRAAELVRSWNGSCTMKTVHGVMKMLHFLSRQKRFLAASLVVFTTQHVSLRLVWALNNIPQLRQAVEDGTCYFGTIDTWLLYKLTKGLVHATDYSNASATAIFDSYQMCWSGFLCSLLSIPLSILPKVQDTSHKFGLCDSSIFGVPIPIMCVMADQQAAMFGECCFDTGDVKITMGTGTFMDINTGSKPHTSVAGLYPLVGWKIGADVVYLAEGNAAGTGAAIKWAQDLELFSDVKETEAIATSVEDSDGVFFVPSFSGLQAPLNDPKACASFMGLKPSTTKRHLVRAILESIAFRNKQLFDVMLRETRIPITKIRADGGVCTNDFIMQLTADLLGRKIARPSHFDMSCLGAAFVAGLGTGYWRNQEELKKLLSTDQHFLPRRSKSEGEKGGLYRGVLQSWEKALQRSMHWYNQP.

Residues Thr22 and Thr23 each contribute to the ATP site. Glycerol contacts are provided by Arg92, Asp269, and Gln270. ATP contacts are provided by Thr291, Gly334, and Gly434.

Belongs to the FGGY kinase family.

The protein localises to the cytoplasm. It carries out the reaction glycerol + ATP = sn-glycerol 3-phosphate + ADP + H(+). Its pathway is polyol metabolism; glycerol degradation via glycerol kinase pathway; sn-glycerol 3-phosphate from glycerol: step 1/1. Its function is as follows. Skin-specific kinase that plays a key role in glycerol metabolism, catalyzing its phosphorylation to produce sn-glycerol 3-phosphate. Involved in skin-specific regulation of sterol regulatory element-binding protein (SREBP) processing and lipid biosynthesis. The chain is Glycerol kinase 5 (gk5) from Danio rerio (Zebrafish).